Here is a 443-residue protein sequence, read N- to C-terminus: Pentatricopeptide repeat-containing protein 6, mitochondrial (443 aa).

A mitochondrion-targeting transit peptide spans 1–13 (MRILGSLPNNIRK). PPR repeat units follow at residues 130 to 164 (NIVDYTHILRVAMYTGNKHILEYIVARVKEKRIRP) and 220 to 254 (NSTTYDYLMVGLSRDGKIREIYDLIDTVWGINENS).

It is found in the mitochondrion. In terms of biological role, mitochondrial RNA-binding protein required for the stability of the atp9 mRNA. This is Pentatricopeptide repeat-containing protein 6, mitochondrial (ppr6) from Schizosaccharomyces pombe (strain 972 / ATCC 24843) (Fission yeast).